Reading from the N-terminus, the 165-residue chain is 6,7-dimethyl-8-ribityllumazine synthase (165 aa).

Residues phenylalanine 24, 62-64 (AFE), and 86-88 (AVI) each bind 5-amino-6-(D-ribitylamino)uracil. 91-92 (DT) serves as a coordination point for (2S)-2-hydroxy-3-oxobutyl phosphate. The active-site Proton donor is the histidine 94. Phenylalanine 119 is a binding site for 5-amino-6-(D-ribitylamino)uracil. A (2S)-2-hydroxy-3-oxobutyl phosphate-binding site is contributed by arginine 133.

It belongs to the DMRL synthase family.

It carries out the reaction (2S)-2-hydroxy-3-oxobutyl phosphate + 5-amino-6-(D-ribitylamino)uracil = 6,7-dimethyl-8-(1-D-ribityl)lumazine + phosphate + 2 H2O + H(+). Its pathway is cofactor biosynthesis; riboflavin biosynthesis; riboflavin from 2-hydroxy-3-oxobutyl phosphate and 5-amino-6-(D-ribitylamino)uracil: step 1/2. In terms of biological role, catalyzes the formation of 6,7-dimethyl-8-ribityllumazine by condensation of 5-amino-6-(D-ribitylamino)uracil with 3,4-dihydroxy-2-butanone 4-phosphate. This is the penultimate step in the biosynthesis of riboflavin. The polypeptide is 6,7-dimethyl-8-ribityllumazine synthase (Prochlorococcus marinus (strain MIT 9303)).